The following is a 604-amino-acid chain: Elongation factor 4 (604 aa).

One can recognise a tr-type G domain in the interval 7–189; sequence SRLRNFCIIA…AVVDRIPPPA (183 aa). GTP-binding positions include 19–24 and 136–139; these read DHGKST and NKID.

It belongs to the TRAFAC class translation factor GTPase superfamily. Classic translation factor GTPase family. LepA subfamily.

The protein resides in the cell inner membrane. It catalyses the reaction GTP + H2O = GDP + phosphate + H(+). Its function is as follows. Required for accurate and efficient protein synthesis under certain stress conditions. May act as a fidelity factor of the translation reaction, by catalyzing a one-codon backward translocation of tRNAs on improperly translocated ribosomes. Back-translocation proceeds from a post-translocation (POST) complex to a pre-translocation (PRE) complex, thus giving elongation factor G a second chance to translocate the tRNAs correctly. Binds to ribosomes in a GTP-dependent manner. In Prochlorococcus marinus (strain MIT 9303), this protein is Elongation factor 4.